The chain runs to 188 residues: Elongation factor P-like protein (188 aa).

This sequence belongs to the elongation factor P family.

The polypeptide is Elongation factor P-like protein (Aliivibrio fischeri (strain ATCC 700601 / ES114) (Vibrio fischeri)).